Consider the following 129-residue polypeptide: Transcription antitermination protein NusB (129 aa).

Belongs to the NusB family.

Functionally, involved in transcription antitermination. Required for transcription of ribosomal RNA (rRNA) genes. Binds specifically to the boxA antiterminator sequence of the ribosomal RNA (rrn) operons. This chain is Transcription antitermination protein NusB, found in Bacillus licheniformis (strain ATCC 14580 / DSM 13 / JCM 2505 / CCUG 7422 / NBRC 12200 / NCIMB 9375 / NCTC 10341 / NRRL NRS-1264 / Gibson 46).